The primary structure comprises 170 residues: CASP-like protein 2D1 (170 aa).

Over Met-1–Leu-4 the chain is Cytoplasmic. The helical transmembrane segment at Leu-5–Val-25 threads the bilayer. Over Thr-26 to Tyr-47 the chain is Extracellular. Residues Met-48–Ile-68 form a helical membrane-spanning segment. Topologically, residues Arg-69–Gln-83 are cytoplasmic. Residues Ile-84–Tyr-104 form a helical membrane-spanning segment. Over Asn-105–Lys-127 the chain is Extracellular. Residues Leu-128 to Ala-148 traverse the membrane as a helical segment. Over Tyr-149–Ala-170 the chain is Cytoplasmic.

Belongs to the Casparian strip membrane proteins (CASP) family. As to quaternary structure, homodimer and heterodimers.

The protein localises to the cell membrane. This Populus trichocarpa (Western balsam poplar) protein is CASP-like protein 2D1.